A 544-amino-acid chain; its full sequence is Chaperonin GroEL (544 aa).

ATP contacts are provided by residues 29–32 (TLGP), K50, 86–90 (DGTTT), G413, 479–481 (DAA), and D495.

The protein belongs to the chaperonin (HSP60) family. Forms a cylinder of 14 subunits composed of two heptameric rings stacked back-to-back. Interacts with the co-chaperonin GroES.

It is found in the cytoplasm. It carries out the reaction ATP + H2O + a folded polypeptide = ADP + phosphate + an unfolded polypeptide.. Its function is as follows. Together with its co-chaperonin GroES, plays an essential role in assisting protein folding. The GroEL-GroES system forms a nano-cage that allows encapsulation of the non-native substrate proteins and provides a physical environment optimized to promote and accelerate protein folding. The protein is Chaperonin GroEL of Borrelia duttonii (strain Ly).